Reading from the N-terminus, the 289-residue chain is 3-methyl-2-oxobutanoate hydroxymethyltransferase (289 aa).

The span at 1–15 (MSTTFKLDTSTSRAN) shows a compositional bias: polar residues. Residues 1–21 (MSTTFKLDTSTSRANPTPAPM) are disordered. Mg(2+) contacts are provided by Asp67 and Asp106. 3-methyl-2-oxobutanoate is bound by residues 67-68 (DS), Asp106, and Lys136. Glu138 provides a ligand contact to Mg(2+). Glu205 functions as the Proton acceptor in the catalytic mechanism.

The protein belongs to the PanB family. As to quaternary structure, homodecamer; pentamer of dimers. Mg(2+) is required as a cofactor.

It is found in the cytoplasm. The catalysed reaction is 3-methyl-2-oxobutanoate + (6R)-5,10-methylene-5,6,7,8-tetrahydrofolate + H2O = 2-dehydropantoate + (6S)-5,6,7,8-tetrahydrofolate. The protein operates within cofactor biosynthesis; (R)-pantothenate biosynthesis; (R)-pantoate from 3-methyl-2-oxobutanoate: step 1/2. Functionally, catalyzes the reversible reaction in which hydroxymethyl group from 5,10-methylenetetrahydrofolate is transferred onto alpha-ketoisovalerate to form ketopantoate. This chain is 3-methyl-2-oxobutanoate hydroxymethyltransferase, found in Erythrobacter litoralis (strain HTCC2594).